The sequence spans 85 residues: Large ribosomal subunit protein bL27 (85 aa).

Residues M1 to T10 are compositionally biased toward gly residues. Residues M1–M20 are disordered.

This sequence belongs to the bacterial ribosomal protein bL27 family.

The sequence is that of Large ribosomal subunit protein bL27 from Delftia acidovorans (strain DSM 14801 / SPH-1).